We begin with the raw amino-acid sequence, 126 residues long: Small ribosomal subunit protein uS13 (126 aa).

The segment at 99–126 (LRGQSTKNNARTRKGKRKTVANKKRVTK) is disordered. A compositionally biased stretch (basic residues) spans 108–126 (ARTRKGKRKTVANKKRVTK).

This sequence belongs to the universal ribosomal protein uS13 family. In terms of assembly, part of the 30S ribosomal subunit. Forms a loose heterodimer with protein S19. Forms two bridges to the 50S subunit in the 70S ribosome.

In terms of biological role, located at the top of the head of the 30S subunit, it contacts several helices of the 16S rRNA. In the 70S ribosome it contacts the 23S rRNA (bridge B1a) and protein L5 of the 50S subunit (bridge B1b), connecting the 2 subunits; these bridges are implicated in subunit movement. Contacts the tRNAs in the A and P-sites. The polypeptide is Small ribosomal subunit protein uS13 (Azobacteroides pseudotrichonymphae genomovar. CFP2).